The primary structure comprises 155 residues: Endoribonuclease YbeY (155 aa).

H117, H121, and H127 together coordinate Zn(2+).

It belongs to the endoribonuclease YbeY family. The cofactor is Zn(2+).

The protein resides in the cytoplasm. Its function is as follows. Single strand-specific metallo-endoribonuclease involved in late-stage 70S ribosome quality control and in maturation of the 3' terminus of the 16S rRNA. The sequence is that of Endoribonuclease YbeY from Psychrobacter cryohalolentis (strain ATCC BAA-1226 / DSM 17306 / VKM B-2378 / K5).